Here is a 497-residue protein sequence, read N- to C-terminus: Cytochrome P450 2D19 (497 aa).

Heme is bound at residue Cys443.

This sequence belongs to the cytochrome P450 family. Requires heme as cofactor.

The protein resides in the endoplasmic reticulum membrane. It is found in the microsome membrane. The enzyme catalyses an organic molecule + reduced [NADPH--hemoprotein reductase] + O2 = an alcohol + oxidized [NADPH--hemoprotein reductase] + H2O + H(+). Its function is as follows. Responsible for the metabolism of many drugs and environmental chemicals that it oxidizes. This Callithrix jacchus (White-tufted-ear marmoset) protein is Cytochrome P450 2D19 (CYP2D19).